Consider the following 354-residue polypeptide: S-adenosylmethionine:tRNA ribosyltransferase-isomerase (354 aa).

The protein belongs to the QueA family. In terms of assembly, monomer.

It is found in the cytoplasm. The enzyme catalyses 7-aminomethyl-7-carbaguanosine(34) in tRNA + S-adenosyl-L-methionine = epoxyqueuosine(34) in tRNA + adenine + L-methionine + 2 H(+). Its pathway is tRNA modification; tRNA-queuosine biosynthesis. Transfers and isomerizes the ribose moiety from AdoMet to the 7-aminomethyl group of 7-deazaguanine (preQ1-tRNA) to give epoxyqueuosine (oQ-tRNA). The protein is S-adenosylmethionine:tRNA ribosyltransferase-isomerase of Klebsiella pneumoniae (strain 342).